A 276-amino-acid polypeptide reads, in one-letter code: Small ribosomal subunit protein uS3 (276 aa).

In terms of domain architecture, KH type-2 spans 17-86 (VDEYLAKELD…NPQIDVQDVG (70 aa)). A disordered region spans residues 193-276 (FQINAPPKEP…AETHGDIQDR (84 aa)). A compositionally biased stretch (low complexity) spans 214–227 (EAEPSQAAETQEQQ). Composition is skewed to basic and acidic residues over residues 228-240 (AGEK…RLLD) and 258-276 (PESR…IQDR).

The protein belongs to the universal ribosomal protein uS3 family. As to quaternary structure, part of the 30S ribosomal subunit.

Binds the lower part of the 30S subunit head. This chain is Small ribosomal subunit protein uS3, found in Methanothrix thermoacetophila (strain DSM 6194 / JCM 14653 / NBRC 101360 / PT) (Methanosaeta thermophila).